Here is a 1009-residue protein sequence, read N- to C-terminus: DENN domain-containing protein 1A (1009 aa).

The 133-residue stretch at 13 to 145 folds into the uDENN domain; sequence FEVYVEVAYP…HKLPIPDPGV (133 aa). In terms of domain architecture, cDENN spans 162 to 298; the sequence is ELPSIPENRN…VISSLKNRLK (137 aa). Residues 300–378 enclose the dDENN domain; it reads VSTTTGDGVA…DGRLDLLNSG (79 aa). Positions 381–385 match the FXDXF motif motif; that stretch reads FSDVF. Residues 453 to 564 form a disordered region; sequence DIAENGCAPT…TGPVPAPPDR (112 aa). At Ser473 the chain carries Phosphoserine. Residues 477–489 are compositionally biased toward basic and acidic residues; sequence EAKDPKLREDRRP. Residues 500–509 show a composition bias toward basic residues; that stretch reads PRPHVVKRPK. At Thr519 the chain carries Phosphothreonine. Residues Ser520, Ser523, Ser536, Ser538, and Ser546 each carry the phosphoserine modification. The Clathrin box signature appears at 569–578; sequence DLLEDVFSNL. Ser592 is modified (phosphoserine). Residues 648–714 form a disordered region; it reads IPSKPPAASP…RKTPELGIVP (67 aa). Phosphoserine is present on Ser749. 2 disordered regions span residues 796–831 and 928–1009; these read STLP…QPPL and RSSA…ETFE. Pro residues-rich tracts occupy residues 820-831 and 945-957; these read AGTPTPFPQPPL and GDPP…PPQG. The segment covering 972 to 983 has biased composition (basic and acidic residues); the sequence is DPFEDLLQKTKQ. Low complexity predominate over residues 986 to 997; sequence SPSPALAPAPDS. Over residues 999–1009 the composition is skewed to basic and acidic residues; that stretch reads EQLRKQWETFE.

In terms of assembly, interacts with RAB35. Interacts with clathrin and with the adapter protein complex 2, AP-2. Interacts with ITSN1 and SH3GL2. Interacts (when phosphorylated) with YWHAE. In terms of processing, phosphorylated on serine and/or threonine in an Akt-dependent manner. Phosphorylation probably regulates the guanine nucleotide exchange factor (GEF) activity, possibly by disrupting an intramolecular interaction between the DENN domain and the C-terminus of the protein, thereby relieving the autoinhibition.

It localises to the cytoplasmic vesicle. It is found in the clathrin-coated vesicle membrane. Its subcellular location is the presynaptic cell membrane. The guanine nucleotide exchange factor (GEF) activity is autoinhibited. Autoinhibition may be the result of intramolecular interaction between the DENN domain and the C-terminus, which is disrupted upon phosphorylation. Activation is regulated by Akt activation. Guanine nucleotide exchange factor (GEF) regulating clathrin-mediated endocytosis through RAB35 activation. Promotes the exchange of GDP to GTP, converting inactive GDP-bound RAB35 into its active GTP-bound form. Regulates clathrin-mediated endocytosis of synaptic vesicles and mediates exit from early endosomes. Binds phosphatidylinositol-phosphates (PtdInsPs), with some preference for PtdIns(3)P. The protein is DENN domain-containing protein 1A of Homo sapiens (Human).